Consider the following 235-residue polypeptide: MSMLFEARGITKSYALPGRPPLPILREADLSAAEGEMVTIIGASGSGKTTLLNMLGTLDTPDGGSIFFEGEPLFQDGRYRMTKKELARFRNRRIGFIFQFHHLLSDFTAQENVAMAEFIATGRLQPAKERAALLLQELGLSGRLNHLPSELSGGEQQRVAIARALMNQPKLVLADEPSGNLDSENSQRLYELMAALSKERRTSFIIVTHNETYAGMSDRCLRMQDGRLQLCTPLQ.

The region spanning 5 to 234 (FEARGITKSY…DGRLQLCTPL (230 aa)) is the ABC transporter domain. 42-49 (GASGSGKT) lines the ATP pocket.

The protein belongs to the ABC transporter superfamily. Lipoprotein translocase (TC 3.A.1.125) family. The complex is composed of two ATP-binding proteins (LolD) and two transmembrane proteins (LolC and LolE).

It is found in the cell inner membrane. Functionally, part of the ABC transporter complex LolCDE involved in the translocation of mature outer membrane-directed lipoproteins, from the inner membrane to the periplasmic chaperone, LolA. Responsible for the formation of the LolA-lipoprotein complex in an ATP-dependent manner. The sequence is that of Lipoprotein-releasing system ATP-binding protein LolD 1 from Chlorobium luteolum (strain DSM 273 / BCRC 81028 / 2530) (Pelodictyon luteolum).